We begin with the raw amino-acid sequence, 112 residues long: uncharacterized protein (112 aa).

It to Buchnera BUsg564.

This is an uncharacterized protein from Buchnera aphidicola subsp. Acyrthosiphon pisum (strain APS) (Acyrthosiphon pisum symbiotic bacterium).